The primary structure comprises 308 residues: uncharacterized protein (308 aa).

An N-terminal signal peptide occupies residues 1-28 (MILMKKFEIILFLFIAVLIFVFGYFVGA).

This is an uncharacterized protein from Methanocaldococcus jannaschii (strain ATCC 43067 / DSM 2661 / JAL-1 / JCM 10045 / NBRC 100440) (Methanococcus jannaschii).